Consider the following 379-residue polypeptide: Cytochrome b (379 aa).

4 helical membrane passes run 34–54 (FGSL…LLAM), 78–99 (WLIR…YFHI), 114–134 (WNTG…GYVL), and 179–199 (FFAL…IHLT). Heme b contacts are provided by His-84 and His-98. Heme b contacts are provided by His-183 and His-197. His-202 lines the a ubiquinone pocket. Helical transmembrane passes span 227–247 (LKDI…TFFS), 289–309 (LGGV…PLLH), 321–341 (FSQV…WVGS), and 348–368 (FIAI…VLFP).

This sequence belongs to the cytochrome b family. As to quaternary structure, the cytochrome bc1 complex contains 11 subunits: 3 respiratory subunits (MT-CYB, CYC1 and UQCRFS1), 2 core proteins (UQCRC1 and UQCRC2) and 6 low-molecular weight proteins (UQCRH/QCR6, UQCRB/QCR7, UQCRQ/QCR8, UQCR10/QCR9, UQCR11/QCR10 and a cleavage product of UQCRFS1). This cytochrome bc1 complex then forms a dimer. Heme b serves as cofactor.

Its subcellular location is the mitochondrion inner membrane. In terms of biological role, component of the ubiquinol-cytochrome c reductase complex (complex III or cytochrome b-c1 complex) that is part of the mitochondrial respiratory chain. The b-c1 complex mediates electron transfer from ubiquinol to cytochrome c. Contributes to the generation of a proton gradient across the mitochondrial membrane that is then used for ATP synthesis. The protein is Cytochrome b (MT-CYB) of Apteryx australis (Southern brown kiwi).